A 349-amino-acid polypeptide reads, in one-letter code: tRNA N6-adenosine threonylcarbamoyltransferase (349 aa).

His-116 and His-120 together coordinate Fe cation. Residues 139-143 (LVSGG), Asp-172, Gly-185, and Asn-283 contribute to the substrate site. Residue Asp-311 participates in Fe cation binding.

The protein belongs to the KAE1 / TsaD family. Fe(2+) is required as a cofactor.

It localises to the cytoplasm. The catalysed reaction is L-threonylcarbamoyladenylate + adenosine(37) in tRNA = N(6)-L-threonylcarbamoyladenosine(37) in tRNA + AMP + H(+). Functionally, required for the formation of a threonylcarbamoyl group on adenosine at position 37 (t(6)A37) in tRNAs that read codons beginning with adenine. Is involved in the transfer of the threonylcarbamoyl moiety of threonylcarbamoyl-AMP (TC-AMP) to the N6 group of A37, together with TsaE and TsaB. TsaD likely plays a direct catalytic role in this reaction. This is tRNA N6-adenosine threonylcarbamoyltransferase from Colwellia psychrerythraea (strain 34H / ATCC BAA-681) (Vibrio psychroerythus).